A 160-amino-acid chain; its full sequence is Keratin-associated protein 13-4 (160 aa).

A run of 4 repeats spans residues 41–50, 51–60, 61–70, and 77–86. Residues 41-86 form a 4 X 10 AA approximate repeats region; that stretch reads CQLRSSLYRDCQKTCWEPASCQKSCYRPRTSILCCPCQTTCSGSLG.

Belongs to the PMG family. Interacts with hair keratins.

In terms of biological role, in the hair cortex, hair keratin intermediate filaments are embedded in an interfilamentous matrix, consisting of hair keratin-associated proteins (KRTAP), which are essential for the formation of a rigid and resistant hair shaft through their extensive disulfide bond cross-linking with abundant cysteine residues of hair keratins. The matrix proteins include the high-sulfur and high-glycine-tyrosine keratins. This chain is Keratin-associated protein 13-4 (KRTAP13-4), found in Homo sapiens (Human).